The sequence spans 502 residues: Thermosome subunit beta (502 aa).

It belongs to the TCP-1 chaperonin family. Forms a Heterooligomeric complex of two stacked eight-membered rings.

Its function is as follows. Molecular chaperone; binds unfolded polypeptides in vitro, and has a weak ATPase activity. The protein is Thermosome subunit beta (thsB) of Desulfurococcus mucosus (Desulfurococcus mobilis).